Consider the following 589-residue polypeptide: Protein kinase G11A (589 aa).

A disordered region spans residues 1–167 (MASKAMPRAP…SACSSISSVT (167 aa)). 3 stretches are compositionally biased toward polar residues: residues 15-36 (NLQSLKLCSQNDSSLETTSPSK), 46-55 (AESSKPNSEV), and 63-76 (TQHQNESIDLTGSN). The span at 91–100 (RLADEEKGVV) shows a compositional bias: basic and acidic residues. Residues 142 to 165 (SSSRCRPSTSSDVSDESACSSISS) show a composition bias toward low complexity. The region spanning 195–533 (FKLLKKLGCG…ATEIKQHPFF (339 aa)) is the Protein kinase domain. ATP is bound by residues 201-209 (LGCGDIGSV) and Lys224. Catalysis depends on Asp320, which acts as the Proton acceptor. The segment at 551-589 (RPVEIERPPKQPVSTSEPAAAPSDAAQKSSDSYLEFDFF) is disordered.

Belongs to the protein kinase superfamily. Ser/Thr protein kinase family.

It carries out the reaction L-seryl-[protein] + ATP = O-phospho-L-seryl-[protein] + ADP + H(+). The catalysed reaction is L-threonyl-[protein] + ATP = O-phospho-L-threonyl-[protein] + ADP + H(+). In terms of biological role, may play a role in the regulation of metabolism and signal transduction processes. This Oryza sativa subsp. indica (Rice) protein is Protein kinase G11A.